The primary structure comprises 334 residues: Nucleoid-associated protein Pfl01_0983 (334 aa).

This sequence belongs to the YejK family.

It is found in the cytoplasm. The protein resides in the nucleoid. The sequence is that of Nucleoid-associated protein Pfl01_0983 from Pseudomonas fluorescens (strain Pf0-1).